A 148-amino-acid polypeptide reads, in one-letter code: Histone H2B.1 (148 aa).

Residues 1-35 (MAPRAEKKPAEKKTAAERPVEENKAAEKAPAEKKP) are compositionally biased toward basic and acidic residues. The disordered stretch occupies residues 1-56 (MAPRAEKKPAEKKTAAERPVEENKAAEKAPAEKKPKAGKKLPPKEAGDKKKKRSKK). Position 2 is a n,N,N-trimethylalanine; alternate (Ala2). At Ala2 the chain carries N,N-dimethylalanine; alternate. Ala2 bears the N-methylalanine; alternate mark. At Lys7 the chain carries N6-acetyllysine; partial. Lys12 is modified (N6-acetyllysine). Lys13 bears the N6,N6-dimethyllysine mark. An N6-acetyllysine mark is found at Lys28, Lys33, and Lys39. Lys40 is subject to N6-acetyllysine; partial. A Glycyl lysine isopeptide (Lys-Gly) (interchain with G-Cter in ubiquitin) cross-link involves residue Lys144.

The protein belongs to the histone H2B family. As to quaternary structure, the nucleosome is a histone octamer containing two molecules each of H2A, H2B, H3 and H4 assembled in one H3-H4 heterotetramer and two H2A-H2B heterodimers. The octamer wraps approximately 147 bp of DNA. Interacts with AHL27. In terms of processing, can be acetylated to form H2BK6ac, H2BK33ac and H2BK34ac. Mono-, di- or trimethylated at the N-terminus to form H2BA1me1/2/3. H2BA1me2 may be acetylated to form H2BA1me2K6ac. Post-translationally, monoubiquitinated by BRE1 to form H2BK143ub1 and deubiquitinated by UBP26. Required for heterochromatic histone H3 di- and trimethylation at H3K4me. May give a specific tag for epigenetic transcriptional activation.

It is found in the nucleus. It localises to the chromosome. Its function is as follows. Core component of nucleosome. Nucleosomes wrap and compact DNA into chromatin, limiting DNA accessibility to the cellular machineries which require DNA as a template. Histones thereby play a central role in transcription regulation, DNA repair, DNA replication and chromosomal stability. DNA accessibility is regulated via a complex set of post-translational modifications of histones, also called histone code, and nucleosome remodeling. The polypeptide is Histone H2B.1 (Arabidopsis thaliana (Mouse-ear cress)).